Consider the following 353-residue polypeptide: Photosystem II protein D1 (353 aa).

Position 2 is an N-acetylthreonine (T2). T2 is modified (phosphothreonine). Transmembrane regions (helical) follow at residues 29–46 (YIGW…TATS), 118–133 (HFLL…EWEL), and 142–156 (WIAV…AATA). H118 contributes to the chlorophyll a binding site. Y126 is a pheophytin a binding site. Residues D170 and E189 each contribute to the [CaMn4O5] cluster site. The helical transmembrane segment at 197-218 (FHMLGVAGVFGGSLFSAMHGSL) threads the bilayer. H198 contacts chlorophyll a. A quinone-binding positions include H215 and 264 to 265 (SF). Residue H215 participates in Fe cation binding. H272 contributes to the Fe cation binding site. Residues 274-288 (FLAAWPVVGIWFTAL) traverse the membrane as a helical segment. Residues H332, E333, D342, and A344 each contribute to the [CaMn4O5] cluster site. The propeptide occupies 345 to 353 (SVELDSIDG).

This sequence belongs to the reaction center PufL/M/PsbA/D family. As to quaternary structure, PSII is composed of 1 copy each of membrane proteins PsbA, PsbB, PsbC, PsbD, PsbE, PsbF, PsbH, PsbI, PsbJ, PsbK, PsbL, PsbM, PsbT, PsbX, PsbY, PsbZ, Psb30/Ycf12, at least 3 peripheral proteins of the oxygen-evolving complex and a large number of cofactors. It forms dimeric complexes. The D1/D2 heterodimer binds P680, chlorophylls that are the primary electron donor of PSII, and subsequent electron acceptors. It shares a non-heme iron and each subunit binds pheophytin, quinone, additional chlorophylls, carotenoids and lipids. D1 provides most of the ligands for the Mn4-Ca-O5 cluster of the oxygen-evolving complex (OEC). There is also a Cl(-1) ion associated with D1 and D2, which is required for oxygen evolution. The PSII complex binds additional chlorophylls, carotenoids and specific lipids. is required as a cofactor. In terms of processing, tyr-161 forms a radical intermediate that is referred to as redox-active TyrZ, YZ or Y-Z. Post-translationally, C-terminally processed by CTPA; processing is essential to allow assembly of the oxygen-evolving complex and thus photosynthetic growth.

The protein resides in the plastid. Its subcellular location is the chloroplast thylakoid membrane. The catalysed reaction is 2 a plastoquinone + 4 hnu + 2 H2O = 2 a plastoquinol + O2. Its function is as follows. Photosystem II (PSII) is a light-driven water:plastoquinone oxidoreductase that uses light energy to abstract electrons from H(2)O, generating O(2) and a proton gradient subsequently used for ATP formation. It consists of a core antenna complex that captures photons, and an electron transfer chain that converts photonic excitation into a charge separation. The D1/D2 (PsbA/PsbD) reaction center heterodimer binds P680, the primary electron donor of PSII as well as several subsequent electron acceptors. The chain is Photosystem II protein D1 from Gnetum parvifolium (Small-leaved jointfir).